Here is a 314-residue protein sequence, read N- to C-terminus: MASVSPSSLLLLFFALLSPLLPLTSALVFREYIGSQFNDVKFSDVPINPDVDFHFILAFAIDYTSGSSPTPTNGNFKPFWDTNNLSPSQVAAVKRTHSNVKVSLSLGGDSVGGKNVFFSPSSVSSWVENAVSSLTRIIKQYHLDGIDIDYEHFKGDPNTFAECIGQLVTRLKKNEVVSFVSIAPFDDAQVQSHYQALWEKYGHQIDYVNFQFYAYSARTSVEQFLKYFEEQSSNYHGGKVLVSFSTDSSGGLKPDNGFFRACSILKKQGKLHGIFVWSADDSLMSNNVFRYEMQAQSMLASVNSRDRAMYWSLL.

Residues 1–26 form the signal peptide; the sequence is MASVSPSSLLLLFFALLSPLLPLTSA. Positions 27-296 constitute a GH18 domain; the sequence is LVFREYIGSQ…NVFRYEMQAQ (270 aa). Glu-151 functions as the Proton donor in the catalytic mechanism.

This sequence belongs to the glycosyl hydrolase 18 family. Chitinase class II subfamily.

It carries out the reaction Random endo-hydrolysis of N-acetyl-beta-D-glucosaminide (1-&gt;4)-beta-linkages in chitin and chitodextrins.. Able to cleave glycolchitin. The protein is Chitinase 1 of Tulipa saxatilis subsp. bakeri (Tulip).